Here is a 120-residue protein sequence, read N- to C-terminus: Aspartate 1-decarboxylase (120 aa).

Residue Ser25 is the Schiff-base intermediate with substrate; via pyruvic acid of the active site. Ser25 bears the Pyruvic acid (Ser) mark. Position 57 (Thr57) interacts with substrate. Catalysis depends on Tyr58, which acts as the Proton donor. Position 73–75 (73–75 (GAA)) interacts with substrate.

This sequence belongs to the PanD family. In terms of assembly, heterooctamer of four alpha and four beta subunits. The cofactor is pyruvate. Is synthesized initially as an inactive proenzyme, which is activated by self-cleavage at a specific serine bond to produce a beta-subunit with a hydroxyl group at its C-terminus and an alpha-subunit with a pyruvoyl group at its N-terminus.

The protein localises to the cytoplasm. The catalysed reaction is L-aspartate + H(+) = beta-alanine + CO2. The protein operates within cofactor biosynthesis; (R)-pantothenate biosynthesis; beta-alanine from L-aspartate: step 1/1. Its function is as follows. Catalyzes the pyruvoyl-dependent decarboxylation of aspartate to produce beta-alanine. The protein is Aspartate 1-decarboxylase of Thermosipho africanus (strain TCF52B).